A 446-amino-acid chain; its full sequence is Phosphoglucosamine mutase (446 aa).

S104 serves as the catalytic Phosphoserine intermediate. Residues S104, D241, D243, and D245 each coordinate Mg(2+). S104 bears the Phosphoserine mark.

The protein belongs to the phosphohexose mutase family. Mg(2+) serves as cofactor. In terms of processing, activated by phosphorylation.

It carries out the reaction alpha-D-glucosamine 1-phosphate = D-glucosamine 6-phosphate. In terms of biological role, catalyzes the conversion of glucosamine-6-phosphate to glucosamine-1-phosphate. The chain is Phosphoglucosamine mutase from Teredinibacter turnerae (strain ATCC 39867 / T7901).